Consider the following 464-residue polypeptide: Soluble pyridine nucleotide transhydrogenase (464 aa).

35–44 (DNRPLVGGNC) contacts FAD.

Belongs to the class-I pyridine nucleotide-disulfide oxidoreductase family. The cofactor is FAD.

Its subcellular location is the cytoplasm. The enzyme catalyses NAD(+) + NADPH = NADH + NADP(+). Conversion of NADPH, generated by peripheral catabolic pathways, to NADH, which can enter the respiratory chain for energy generation. The polypeptide is Soluble pyridine nucleotide transhydrogenase (Ectopseudomonas mendocina (strain ymp) (Pseudomonas mendocina)).